Here is a 145-residue protein sequence, read N- to C-terminus: Ribonuclease H (145 aa).

One can recognise an RNase H type-1 domain in the interval 1–142 (MKEVVIYTDG…CDEIARSMIK (142 aa)). The Mg(2+) site is built by Asp9, Glu47, Asp69, and Asp134.

It belongs to the RNase H family. Monomer. Requires Mg(2+) as cofactor.

The protein resides in the cytoplasm. The catalysed reaction is Endonucleolytic cleavage to 5'-phosphomonoester.. Functionally, endonuclease that specifically degrades the RNA of RNA-DNA hybrids. This chain is Ribonuclease H, found in Caldicellulosiruptor saccharolyticus (strain ATCC 43494 / DSM 8903 / Tp8T 6331).